A 165-amino-acid chain; its full sequence is MSLPEKAFPVSWDQFHRDARALAWRLADNGQEWRAMVCITRGGLVPAAIVSRELNIRMIETVCIASYHDYDTQGQMKVLKSISPEIAKDGGEGVLIVDDLTDTGKTAAEVRAMLPRAHFAAVYAKPKGRPLVDTFVTEVSQDTWIYFPWDLGFTYQEPIAKGTRG.

Residues Arg-41–Gly-42 and Asp-98–Thr-106 each bind 5-phospho-alpha-D-ribose 1-diphosphate. Position 99 (Asp-99) interacts with Mg(2+). Guanine is bound by residues Asp-102 and Ile-145. Xanthine is bound by residues Asp-102 and Ile-145. GMP-binding positions include Asp-102–Thr-106 and Trp-144–Ile-145.

It belongs to the purine/pyrimidine phosphoribosyltransferase family. XGPT subfamily. Homotetramer. Mg(2+) serves as cofactor.

The protein localises to the cell inner membrane. The catalysed reaction is GMP + diphosphate = guanine + 5-phospho-alpha-D-ribose 1-diphosphate. It catalyses the reaction XMP + diphosphate = xanthine + 5-phospho-alpha-D-ribose 1-diphosphate. The enzyme catalyses IMP + diphosphate = hypoxanthine + 5-phospho-alpha-D-ribose 1-diphosphate. It participates in purine metabolism; GMP biosynthesis via salvage pathway; GMP from guanine: step 1/1. The protein operates within purine metabolism; XMP biosynthesis via salvage pathway; XMP from xanthine: step 1/1. In terms of biological role, purine salvage pathway enzyme that catalyzes the transfer of the ribosyl-5-phosphate group from 5-phospho-alpha-D-ribose 1-diphosphate (PRPP) to the N9 position of the 6-oxopurines guanine and xanthine to form the corresponding ribonucleotides GMP (guanosine 5'-monophosphate) and XMP (xanthosine 5'-monophosphate), with the release of PPi. To a lesser extent, also acts on hypoxanthine. The chain is Xanthine-guanine phosphoribosyltransferase from Rhizobium meliloti (strain 1021) (Ensifer meliloti).